A 618-amino-acid polypeptide reads, in one-letter code: UvrABC system protein C (618 aa).

A GIY-YIG domain is found at 13 to 92; sequence DKPGVYLMKN…IKKYRPKYNI (80 aa). A UVR domain is found at 204 to 239; it reads LDIVENFKLNMEKAAENLEFEKAAMLRDKINIIEKI.

This sequence belongs to the UvrC family. In terms of assembly, interacts with UvrB in an incision complex.

The protein localises to the cytoplasm. Its function is as follows. The UvrABC repair system catalyzes the recognition and processing of DNA lesions. UvrC both incises the 5' and 3' sides of the lesion. The N-terminal half is responsible for the 3' incision and the C-terminal half is responsible for the 5' incision. This chain is UvrABC system protein C, found in Clostridium botulinum (strain ATCC 19397 / Type A).